The following is a 291-amino-acid chain: Phosphatidylglycerol--prolipoprotein diacylglyceryl transferase (291 aa).

Transmembrane regions (helical) follow at residues 21-41, 60-80, 96-116, 130-150, 198-218, 225-245, and 260-280; these read VSLH…MWLA, LLYA…VLFY, WDGG…MIIF, FIAP…FING, SQLY…NLFI, GSVS…VEFF, and ISMG…MMVW. R143 lines the a 1,2-diacyl-sn-glycero-3-phospho-(1'-sn-glycerol) pocket.

It belongs to the Lgt family.

It localises to the cell inner membrane. The catalysed reaction is L-cysteinyl-[prolipoprotein] + a 1,2-diacyl-sn-glycero-3-phospho-(1'-sn-glycerol) = an S-1,2-diacyl-sn-glyceryl-L-cysteinyl-[prolipoprotein] + sn-glycerol 1-phosphate + H(+). Its pathway is protein modification; lipoprotein biosynthesis (diacylglyceryl transfer). In terms of biological role, catalyzes the transfer of the diacylglyceryl group from phosphatidylglycerol to the sulfhydryl group of the N-terminal cysteine of a prolipoprotein, the first step in the formation of mature lipoproteins. The chain is Phosphatidylglycerol--prolipoprotein diacylglyceryl transferase from Klebsiella pneumoniae (strain 342).